The sequence spans 639 residues: ATP-dependent zinc metalloprotease FtsH (639 aa).

The Cytoplasmic segment spans residues 1-4; that stretch reads MNST. A helical membrane pass occupies residues 5–25; the sequence is VKTIVFWVFILACCILLWQVF. Residues 26-104 lie on the Periplasmic side of the membrane; that stretch reads QRSSNTGKEQ…TVKDNSGSPW (79 aa). Residues 105–125 traverse the membrane as a helical segment; sequence WSILIQFSPVLVLVALWFFMI. Over 126–639 the chain is Cytoplasmic; that stretch reads RQMQSGGNKA…GLPEGSPSPA (514 aa). 196–203 is an ATP binding site; that stretch reads GPPGTGKT. His-418 contributes to the Zn(2+) binding site. Glu-419 is an active-site residue. Zn(2+) contacts are provided by His-422 and Asp-494. Residues 597–639 form a disordered region; that stretch reads KDLPPLKPSGGSGTATTDDVQQVLKPSSDRGAGGLPEGSPSPA.

This sequence in the central section; belongs to the AAA ATPase family. In the C-terminal section; belongs to the peptidase M41 family. As to quaternary structure, homohexamer. Zn(2+) serves as cofactor.

The protein resides in the cell inner membrane. Acts as a processive, ATP-dependent zinc metallopeptidase for both cytoplasmic and membrane proteins. Plays a role in the quality control of integral membrane proteins. This Acidobacterium capsulatum (strain ATCC 51196 / DSM 11244 / BCRC 80197 / JCM 7670 / NBRC 15755 / NCIMB 13165 / 161) protein is ATP-dependent zinc metalloprotease FtsH.